A 278-amino-acid chain; its full sequence is MRLIILDTSDYVGEWSAKYVMKRINDFKPGPSRFFTLGLPTGSTPLGLYRNLIKFHQEGKISFKYVKTFNMDEYVDLPRDHPESYHYFMWHNFFKHIDIDPVNVHILDGNAPDLVAECNAFEDKIKAAGGIELFIGGIGPDGHIAFNEPGSSLVSRTRVKTLAQDTLEANARFFGNDISKVPKQALTVGVGTVMDAREVMILIIGAHKAFALYKAIEEGVNHMWTVSAFQQHPHTIMICDEDATLELRVKTVKYFKALSNVHHKLIEEGSTDVRKLCK.

Asp72 functions as the Proton acceptor; for enolization step in the catalytic mechanism. Asp141 acts as the For ring-opening step in catalysis. Residue His143 is the Proton acceptor; for ring-opening step of the active site. Glu148 (for ring-opening step) is an active-site residue.

The protein belongs to the glucosamine/galactosamine-6-phosphate isomerase family. As to quaternary structure, homohexamer.

It is found in the cytoplasm. The enzyme catalyses alpha-D-glucosamine 6-phosphate + H2O = beta-D-fructose 6-phosphate + NH4(+). It participates in nucleotide-sugar biosynthesis; UDP-N-acetyl-alpha-D-glucosamine biosynthesis; alpha-D-glucosamine 6-phosphate from D-fructose 6-phosphate: step 1/1. Its function is as follows. Catalyzes the reversible conversion of alpha-D-glucosamine 6-phosphate (GlcN-6P) into beta-D-fructose 6-phosphate (Fru-6P) and ammonium ion, a regulatory reaction step in de novo uridine diphosphate-N-acetyl-alpha-D-glucosamine (UDP-GlcNAc) biosynthesis via hexosamine pathway. The sequence is that of Glucosamine-6-phosphate deaminase (Gnpda1) from Aedes aegypti (Yellowfever mosquito).